The primary structure comprises 690 residues: Glycine--tRNA ligase beta subunit (690 aa).

Belongs to the class-II aminoacyl-tRNA synthetase family. In terms of assembly, tetramer of two alpha and two beta subunits.

It is found in the cytoplasm. It catalyses the reaction tRNA(Gly) + glycine + ATP = glycyl-tRNA(Gly) + AMP + diphosphate. The polypeptide is Glycine--tRNA ligase beta subunit (Desulfitobacterium hafniense (strain Y51)).